A 532-amino-acid polypeptide reads, in one-letter code: Glucan synthesis regulatory protein (532 aa).

The tract at residues threonine 374–isoleucine 532 is disordered. Residues methionine 381–serine 393 are compositionally biased toward low complexity. Positions proline 447–serine 457 are enriched in polar residues. The segment covering serine 475–glycine 516 has biased composition (basic and acidic residues).

The protein belongs to the KNR4/SMI1 family.

Functionally, involved in the regulation of 1,3-beta-glucan synthase activity and cell-wall formation. The polypeptide is Glucan synthesis regulatory protein (cot-2) (Neurospora crassa (strain ATCC 24698 / 74-OR23-1A / CBS 708.71 / DSM 1257 / FGSC 987)).